Reading from the N-terminus, the 314-residue chain is Thymidylate synthase (314 aa).

DUMP contacts are provided by residues Arg-21 and 176 to 177 (RR). Cys-196 (nucleophile) is an active-site residue. Residues 216–219 (RSAD), Asn-227, and 257–259 (HLY) contribute to the dUMP site. Asp-219 lines the (6R)-5,10-methylene-5,6,7,8-tetrahydrofolate pocket. (6R)-5,10-methylene-5,6,7,8-tetrahydrofolate is bound at residue Ser-313.

Belongs to the thymidylate synthase family. Bacterial-type ThyA subfamily. As to quaternary structure, homodimer.

The protein localises to the cytoplasm. The catalysed reaction is dUMP + (6R)-5,10-methylene-5,6,7,8-tetrahydrofolate = 7,8-dihydrofolate + dTMP. Its pathway is pyrimidine metabolism; dTTP biosynthesis. Its function is as follows. Catalyzes the reductive methylation of 2'-deoxyuridine-5'-monophosphate (dUMP) to 2'-deoxythymidine-5'-monophosphate (dTMP) while utilizing 5,10-methylenetetrahydrofolate (mTHF) as the methyl donor and reductant in the reaction, yielding dihydrofolate (DHF) as a by-product. This enzymatic reaction provides an intracellular de novo source of dTMP, an essential precursor for DNA biosynthesis. This Listeria innocua serovar 6a (strain ATCC BAA-680 / CLIP 11262) protein is Thymidylate synthase.